Reading from the N-terminus, the 109-residue chain is MSEQRDILKALAEVLEERRQADPATSYVAKLHHKGLDAILKKVGEEATEAVVAAKGGDRSQVIYETADLWFHSLIMLSACDAGPDDVLAELERRFGLSGIDEKAARNGQ.

This sequence belongs to the PRA-PH family.

Its subcellular location is the cytoplasm. The enzyme catalyses 1-(5-phospho-beta-D-ribosyl)-ATP + H2O = 1-(5-phospho-beta-D-ribosyl)-5'-AMP + diphosphate + H(+). The protein operates within amino-acid biosynthesis; L-histidine biosynthesis; L-histidine from 5-phospho-alpha-D-ribose 1-diphosphate: step 2/9. This chain is Phosphoribosyl-ATP pyrophosphatase, found in Alkalilimnicola ehrlichii (strain ATCC BAA-1101 / DSM 17681 / MLHE-1).